A 138-amino-acid polypeptide reads, in one-letter code: Putative pre-16S rRNA nuclease (138 aa).

This sequence belongs to the YqgF nuclease family.

It is found in the cytoplasm. Its function is as follows. Could be a nuclease involved in processing of the 5'-end of pre-16S rRNA. This chain is Putative pre-16S rRNA nuclease, found in Salmonella schwarzengrund (strain CVM19633).